The primary structure comprises 578 residues: Putative diflavin flavoprotein A 2 (578 aa).

The zinc metallo-hydrolase stretch occupies residues 48 to 240; the sequence is RHGTTYNSFL…LQVVLVATGH (193 aa). Fe cation is bound by residues His-97, Glu-99, Asp-101, His-164, Asp-183, and His-240. The Flavodoxin-like domain maps to 269–406; sequence VALFYVDGYG…LCREAGTDLG (138 aa). The tract at residues 429–578 is flavodoxin-reductase-like; the sequence is IGRLSTGLYI…THHRKLGNHY (150 aa).

This sequence in the N-terminal section; belongs to the zinc metallo-hydrolase group 3 family. It in the C-terminal section; belongs to the flavodoxin reductase family. It depends on Fe cation as a cofactor.

Mediates electron transfer from NADH to oxygen, reducing it to water. This modular protein has 3 redox cofactors, in other organisms the same activity requires 2 or 3 proteins. This chain is Putative diflavin flavoprotein A 2 (dfa2), found in Synechocystis sp. (strain ATCC 27184 / PCC 6803 / Kazusa).